The following is an 875-amino-acid chain: Cell surface glycoprotein (875 aa).

The first 23 residues, 1–23 (MTNTKQKINAVFLSALMVMSVFA), serve as a signal peptide directing secretion. Polar residues predominate over residues 137–157 (EVQNGGSGDVTGSTLQTSSSG). Disordered regions lie at residues 137–158 (EVQN…SSGP) and 197–217 (LPTA…DFDV). A compositionally biased stretch (low complexity) spans 205 to 216 (DNGASGSNGDFD). Residue N253 is glycosylated (N-linked (GlcNAc...) asparagine). The disordered stretch occupies residues 380–414 (YPASDSSNDGYASGGSHASSVTVRDTDGDGTDDSE). A compositionally biased stretch (polar residues) spans 383–402 (SDSSNDGYASGGSHASSVTV). N-linked (GlcNAc...) asparagine glycans are attached at residues N455, N563, N715, and N774. The interval 794-852 (EAGSLEEEQPDTETPEPDTETPEPDTETPEPDTETPEPDTETPEPDTETEEATTEASGP) is disordered. The span at 797 to 846 (SLEEEQPDTETPEPDTETPEPDTETPEPDTETPEPDTETPEPDTETEEAT) shows a compositional bias: acidic residues. Residues 851–875 (GPGFTAAIALIALVAAALLAVRRDN) form a helical membrane-spanning segment. The PGF sorting signal signature appears at 852 to 854 (PGF).

Belongs to the halobacterial S-layer protein family. Asn-455 is glycosylated by a pentasaccharide comprising a hexose, 2 hexuronic acids, a methyl ester of a hexuronic acid and a final hexose. The complete pentasaccharide is first assembled on dolichol phosphate and then transferred the glycan to the target Asn. Post-translationally, cleaved by the archaeosortase ArtA at the C-terminus, with removal of a short hydrophobic segment. In terms of processing, lipidation.

It is found in the secreted. The protein resides in the cell wall. The protein localises to the S-layer. Its subcellular location is the cell membrane. In terms of biological role, S-layer protein. The S-layer is a paracrystalline mono-layered assembly of proteins which coat the surface of the cell. The protein is Cell surface glycoprotein (csg1) of Haloarcula marismortui (strain ATCC 43049 / DSM 3752 / JCM 8966 / VKM B-1809) (Halobacterium marismortui).